The following is a 141-amino-acid chain: Large ribosomal subunit protein uL11 (141 aa).

The protein belongs to the universal ribosomal protein uL11 family. In terms of assembly, part of the ribosomal stalk of the 50S ribosomal subunit. Interacts with L10 and the large rRNA to form the base of the stalk. L10 forms an elongated spine to which L12 dimers bind in a sequential fashion forming a multimeric L10(L12)X complex. Post-translationally, one or more lysine residues are methylated.

Forms part of the ribosomal stalk which helps the ribosome interact with GTP-bound translation factors. The polypeptide is Large ribosomal subunit protein uL11 (Prochlorococcus marinus (strain MIT 9215)).